A 213-amino-acid chain; its full sequence is Orotate phosphoribosyltransferase (213 aa).

Lys-26 contributes to the 5-phospho-alpha-D-ribose 1-diphosphate binding site. Orotate is bound at residue 34-35 (FF). Residues 72-73 (YK), Arg-99, Lys-100, Lys-103, His-105, and 124-132 (DDVITAGTA) contribute to the 5-phospho-alpha-D-ribose 1-diphosphate site. 2 residues coordinate orotate: Thr-128 and Arg-156.

This sequence belongs to the purine/pyrimidine phosphoribosyltransferase family. PyrE subfamily. In terms of assembly, homodimer. It depends on Mg(2+) as a cofactor.

The enzyme catalyses orotidine 5'-phosphate + diphosphate = orotate + 5-phospho-alpha-D-ribose 1-diphosphate. It participates in pyrimidine metabolism; UMP biosynthesis via de novo pathway; UMP from orotate: step 1/2. In terms of biological role, catalyzes the transfer of a ribosyl phosphate group from 5-phosphoribose 1-diphosphate to orotate, leading to the formation of orotidine monophosphate (OMP). In Erwinia tasmaniensis (strain DSM 17950 / CFBP 7177 / CIP 109463 / NCPPB 4357 / Et1/99), this protein is Orotate phosphoribosyltransferase.